The sequence spans 377 residues: Homoserine O-acetyltransferase (377 aa).

Residues 48 to 347 form the AB hydrolase-1 domain; it reads NVVLIEHALT…PVGHDAFLTE (300 aa). Ser-143 serves as the catalytic Nucleophile. A substrate-binding site is contributed by Arg-213. Active-site residues include Asp-311 and His-341. Asp-342 contacts substrate.

The protein belongs to the AB hydrolase superfamily. MetX family. Homodimer.

Its subcellular location is the cytoplasm. The enzyme catalyses L-homoserine + acetyl-CoA = O-acetyl-L-homoserine + CoA. It participates in amino-acid biosynthesis; L-methionine biosynthesis via de novo pathway; O-acetyl-L-homoserine from L-homoserine: step 1/1. Functionally, transfers an acetyl group from acetyl-CoA to L-homoserine, forming acetyl-L-homoserine. This chain is Homoserine O-acetyltransferase, found in Corynebacterium efficiens (strain DSM 44549 / YS-314 / AJ 12310 / JCM 11189 / NBRC 100395).